The primary structure comprises 569 residues: Santalene synthase (569 aa).

The (2E)-geranyl diphosphate site is built by R284, D321, D325, and R460. Residues D321 and D325 each contribute to the Mg(2+) site. The DDXXD motif signature appears at D321–D325. Mg(2+) is bound by residues N463, T467, and E471.

This sequence belongs to the terpene synthase family. Tpsb subfamily. Mg(2+) is required as a cofactor. Mn(2+) serves as cofactor.

The catalysed reaction is (2E,6E)-farnesyl diphosphate = (1S,5S,6R)-alpha-bergamotene + diphosphate. The enzyme catalyses (2E,6E)-farnesyl diphosphate = (+)-alpha-santalene + diphosphate. It catalyses the reaction (2E,6E)-farnesyl diphosphate = (-)-beta-santalene + diphosphate. Catalyzes a mixture of sesquiterpenoids from (2E,6E)-farnesyl diphosphate in fragrance biosynthesis. Catalyzes the formation of alpha-santalene, beta-santalene, epi-beta-santalene and exo-alpha-bergamotene, as well as traces of alpha-farnesene and beta-farnesene. Also acts with (Z,Z)-farnesyl diphosphate isomer, producing alpha-endo-bergamotene, alpha-santalene, (Z)-beta-farnesene, epi-beta-santalene, and beta-santalene. The protein is Santalene synthase of Santalum album (White sandalwood).